The sequence spans 272 residues: Phosphoglycolate phosphatase 1 (272 aa).

Asp-19 acts as the Nucleophile in catalysis. The Mg(2+) site is built by Asp-19, Asp-21, and Asp-182.

The protein belongs to the HAD-like hydrolase superfamily. CbbY/CbbZ/Gph/YieH family. It depends on Mg(2+) as a cofactor.

The catalysed reaction is 2-phosphoglycolate + H2O = glycolate + phosphate. The protein operates within organic acid metabolism; glycolate biosynthesis; glycolate from 2-phosphoglycolate: step 1/1. Functionally, specifically catalyzes the dephosphorylation of 2-phosphoglycolate. Is involved in the dissimilation of the intracellular 2-phosphoglycolate formed during the DNA repair of 3'-phosphoglycolate ends, a major class of DNA lesions induced by oxidative stress. The chain is Phosphoglycolate phosphatase 1 from Pseudomonas aeruginosa (strain ATCC 15692 / DSM 22644 / CIP 104116 / JCM 14847 / LMG 12228 / 1C / PRS 101 / PAO1).